Reading from the N-terminus, the 346-residue chain is Cytochrome c551 peroxidase (346 aa).

An N-terminal signal peptide occupies residues methionine 1–alanine 23. Heme c is bound by residues cysteine 74, cysteine 77, histidine 78, cysteine 220, cysteine 223, histidine 224, histidine 284, and methionine 298.

The cofactor is heme c. Post-translationally, binds 2 heme groups per subunit. Sequencing of the whole protein indicates about 20% starts on Val-247.

It localises to the periplasm. The enzyme catalyses 2 Fe(II)-[cytochrome c] + H2O2 + 2 H(+) = 2 Fe(III)-[cytochrome c] + 2 H2O. Catalyzes the peroxidative oxidation of azurin and cytochrome c551. Likely to provide protection against toxic peroxides. The protein is Cytochrome c551 peroxidase (ccpA) of Pseudomonas aeruginosa (strain ATCC 15692 / DSM 22644 / CIP 104116 / JCM 14847 / LMG 12228 / 1C / PRS 101 / PAO1).